The following is a 209-amino-acid chain: Ubiquitin-conjugating enzyme E2 S (209 aa).

The UBC core domain occupies 14-160; that stretch reads QTIRQVMREL…ARMMTEIHAQ (147 aa). Cys98 functions as the Glycyl thioester intermediate in the catalytic mechanism. Residues 164-209 form a disordered region; the sequence is CGVGASGDAKDDDGPSTKKHAGLDKKLQDKKKEKLLKEKKRMLKRL. Basic and acidic residues predominate over residues 171–199; that stretch reads DAKDDDGPSTKKHAGLDKKLQDKKKEKLL. Positions 200 to 209 are enriched in basic residues; sequence KEKKRMLKRL.

Belongs to the ubiquitin-conjugating enzyme family.

The enzyme catalyses S-ubiquitinyl-[E1 ubiquitin-activating enzyme]-L-cysteine + [E2 ubiquitin-conjugating enzyme]-L-cysteine = [E1 ubiquitin-activating enzyme]-L-cysteine + S-ubiquitinyl-[E2 ubiquitin-conjugating enzyme]-L-cysteine.. The protein operates within protein modification; protein ubiquitination. Catalyzes the covalent attachment of ubiquitin to other proteins. Acts as an essential factor of the anaphase promoting complex/cyclosome (APC/C), a cell cycle-regulated ubiquitin ligase that controls progression through mitosis. Acts by specifically elongating polyubiquitin chains initiated by the E2 enzyme vih/UbcH10 on APC/C substrates, enhancing the degradation of APC/C substrates by the proteasome and promoting mitotic exit. This chain is Ubiquitin-conjugating enzyme E2 S, found in Drosophila yakuba (Fruit fly).